The sequence spans 761 residues: Prolyl endopeptidase FAP (761 aa).

The Cytoplasmic portion of the chain corresponds to 1-4 (MKTW). The helical; Signal-anchor for type II membrane protein transmembrane segment at 5 to 25 (LKTVFGVTTLAALALVVICIV) threads the bilayer. Topologically, residues 26 to 761 (LRPSRVYKPE…FLKQCFSLSD (736 aa)) are extracellular. Residues N49, N92, and N99 are each glycosylated (N-linked (GlcNAc...) asparagine). E203 and E204 together coordinate substrate. N-linked (GlcNAc...) asparagine glycans are attached at residues N227 and N314. 3 cysteine pairs are disulfide-bonded: C321-C332, C438-C441, and C448-C466. S624 acts as the Charge relay system in catalysis. The cysteines at positions 643 and 756 are disulfide-linked. N-linked (GlcNAc...) asparagine glycosylation occurs at N679. Catalysis depends on charge relay system residues D702 and H734.

Belongs to the peptidase S9B family. Homodimer; homodimerization is required for activity of both plasma membrane and soluble forms. The monomer is inactive. Heterodimer with DPP4. Interacts with PLAUR; the interaction occurs at the cell surface of invadopodia membranes. Interacts with ITGB1. Interacts with ITGA3. Associates with integrin alpha-3/beta-1; the association occurs in a collagen-dependent manner at the cell surface of invadopodia membranes. In terms of processing, N-glycosylated. The N-terminus may be blocked. Expressed strongly in uterus, pancreas, submaxillary gland and skin, less in lymph node, ovary, skeletal muscle, adrenal and bone marrow. Expressed in reactive stromal fibroblast in epithelial cancers. Expressed in melanocytes but not melanomas (at protein level). Detected in fibroblasts, in placenta, uterus, embryos from day 7-19 and in newborn mice (P1).

It localises to the cell surface. The protein localises to the cell membrane. It is found in the cell projection. Its subcellular location is the lamellipodium membrane. The protein resides in the invadopodium membrane. It localises to the ruffle membrane. The protein localises to the membrane. It is found in the secreted. The catalysed reaction is Hydrolysis of Pro-|-Xaa &gt;&gt; Ala-|-Xaa in oligopeptides.. The enzyme catalyses Release of an N-terminal dipeptide, Xaa-Yaa-|-Zaa-, from a polypeptide, preferentially when Yaa is Pro, provided Zaa is neither Pro nor hydroxyproline.. Its activity is regulated as follows. Gelatinase activity is inhibited by serine-protease inhibitors, such as phenylmethylsulfonyl fluoride (PMSF), 4-(2-aminoethyl)-benzenesulfonyl fluoride hydrochloride (AEBSF), 4-amidino phenylsulfonyl fluoride (APSF) and diisopropyl fluorophosphate (DFP), N-ethylmaleimide (NEM) and phenylmethylsulfonyl fluoride (PMSF). Dipeptidyl peptidase activity is inhibited by 2,2'-azino-bis(3-ethylbenzthiazoline-6-sulfonic acid), diisopropylfluorophosphate (DFP). Prolyl endopeptidase activity is inhibited by the boronic acid peptide Ac-Gly-BoroPro, Ac-Gly-Pro-chloromethyl ketone and Thr-Ser-Gly-chloromethyl ketone. Cell surface glycoprotein serine protease that participates in extracellular matrix degradation and involved in many cellular processes including tissue remodeling, fibrosis, wound healing, inflammation and tumor growth. Both plasma membrane and soluble forms exhibit post-proline cleaving endopeptidase activity, with a marked preference for Ala/Ser-Gly-Pro-Ser/Asn/Ala consensus sequences, on substrate such as alpha-2-antiplasmin SERPINF2 and SPRY2. Degrade also gelatin, heat-denatured type I collagen, but not native collagen type I and IV, vibronectin, tenascin, laminin, fibronectin, fibrin or casein. Also has dipeptidyl peptidase activity, exhibiting the ability to hydrolyze the prolyl bond two residues from the N-terminus of synthetic dipeptide substrates provided that the penultimate residue is proline, with a preference for Ala-Pro, Ile-Pro, Gly-Pro, Arg-Pro and Pro-Pro. Natural neuropeptide hormones for dipeptidyl peptidase are the neuropeptide Y (NPY), peptide YY (PYY), substance P (TAC1) and brain natriuretic peptide 32 (NPPB). The plasma membrane form, in association with either DPP4, PLAUR or integrins, is involved in the pericellular proteolysis of the extracellular matrix (ECM), and hence promotes cell adhesion, migration and invasion through the ECM. Plays a role in tissue remodeling during development and wound healing. Participates in the cell invasiveness towards the ECM in malignant melanoma cancers. Enhances tumor growth progression by increasing angiogenesis, collagen fiber degradation and apoptosis and by reducing antitumor response of the immune system. Promotes glioma cell invasion through the brain parenchyma by degrading the proteoglycan brevican. Acts as a tumor suppressor in melanocytic cells through regulation of cell proliferation and survival in a serine protease activity-independent manner. The polypeptide is Prolyl endopeptidase FAP (Mus musculus (Mouse)).